The sequence spans 768 residues: Degenerin mec-4 (768 aa).

Residues Met-1–Ala-109 are Cytoplasmic-facing. Residues Val-110–Leu-130 traverse the membrane as a helical segment. Over Asp-131–Gln-718 the chain is Extracellular. Disordered stretches follow at residues Ala-187–Asp-221 and Gly-237–Thr-260. Residues Gly-189–Ile-200 show a composition bias toward basic and acidic residues. The span at Ala-203–Lys-212 shows a compositional bias: low complexity. The span at Glu-243–Glu-252 shows a compositional bias: acidic residues. N-linked (GlcNAc...) asparagine glycosylation is found at Asn-336, Asn-357, Asn-480, Asn-484, Asn-503, and Asn-671. A helical transmembrane segment spans residues Leu-719–Glu-739. Residues Thr-740 to Phe-768 lie on the Cytoplasmic side of the membrane.

This sequence belongs to the amiloride-sensitive sodium channel (TC 1.A.6) family. The channel is probably composed of at least the mec-2, mec-4, mec-6 and mec-10 subunits.

Its subcellular location is the membrane. Functionally, probable sodium channel subunit. May be needed for mechanosensory transduction (touch sensitivity). Negatively regulates the turning step of male mating behavior. The sequence is that of Degenerin mec-4 (mec-4) from Caenorhabditis briggsae.